Consider the following 434-residue polypeptide: Glutamyl-tRNA reductase (434 aa).

Substrate contacts are provided by residues 49 to 52 (TCNR), S109, 114 to 116 (EPQ), and Q120. Catalysis depends on C50, which acts as the Nucleophile. An NADP(+)-binding site is contributed by 189 to 194 (GAGEMC).

Belongs to the glutamyl-tRNA reductase family. Homodimer.

It catalyses the reaction (S)-4-amino-5-oxopentanoate + tRNA(Glu) + NADP(+) = L-glutamyl-tRNA(Glu) + NADPH + H(+). It functions in the pathway porphyrin-containing compound metabolism; protoporphyrin-IX biosynthesis; 5-aminolevulinate from L-glutamyl-tRNA(Glu): step 1/2. Catalyzes the NADPH-dependent reduction of glutamyl-tRNA(Glu) to glutamate 1-semialdehyde (GSA). The chain is Glutamyl-tRNA reductase from Geotalea daltonii (strain DSM 22248 / JCM 15807 / FRC-32) (Geobacter daltonii).